The primary structure comprises 727 residues: Engulfment and cell motility protein 1 (727 aa).

The residue at position 18 (Tyr18) is a Phosphotyrosine; by HCK. Lys100 and Lys105 each carry N6-acetyllysine. Tyr216 is modified (phosphotyrosine; by HCK). The ELMO domain occupies 319–492 (AQRDIIFELR…VVKEQVMRAL (174 aa)). At Ser344 the chain carries Phosphoserine. A phosphotyrosine; by HCK mark is found at Tyr395 and Tyr511. The 122-residue stretch at 555–676 (RLVEGTCFRK…DGLNALLGKD (122 aa)) folds into the PH domain. Positions 707–714 (PDAPPPIP) match the SH3-binding motif. A Phosphotyrosine; by HCK modification is found at Tyr720.

In terms of assembly, interacts with ADGRB1. Interacts directly with the SH3-domain of DOCK1 via its SH3-binding site. Part of a complex with DOCK1 and RAC1. Part of a complex with DOCK1 and CRK isoform CRK-II. Interacts with PLEKHG6. Interacts with HCK (via SH3 domain). Interacts with ADGRB3. Interacts with DOCK5. Post-translationally, phosphorylated by HCK. Widely expressed, with a higher expression in the spleen and placenta.

It is found in the cytoplasm. The protein localises to the cell membrane. In terms of biological role, involved in cytoskeletal rearrangements required for phagocytosis of apoptotic cells and cell motility. Acts in association with DOCK1 and CRK. Was initially proposed to be required in complex with DOCK1 to activate Rac Rho small GTPases. May enhance the guanine nucleotide exchange factor (GEF) activity of DOCK1. The protein is Engulfment and cell motility protein 1 (ELMO1) of Homo sapiens (Human).